Reading from the N-terminus, the 187-residue chain is Ponticulin-like protein K (187 aa).

The signal sequence occupies residues 1-19 (MKNLILLFLLISIINLIQS). N31, N70, N86, N93, N119, N128, N146, N160, and N161 each carry an N-linked (GlcNAc...) asparagine glycan. A compositionally biased stretch (low complexity) spans 115–146 (PSPSNSSNPSPSPNTTSSSSLSSSSLNSNEPN). The disordered stretch occupies residues 115–161 (PSPSNSSNPSPSPNTTSSSSLSSSSLNSNEPNQTTKPPKTNEPQKNN). A compositionally biased stretch (polar residues) spans 147-161 (QTTKPPKTNEPQKNN). A lipid anchor (GPI-like-anchor amidated asparagine) is attached at N161. The propeptide at 162 to 187 (STSNIPNFFAIFGFLVLIIFILGDKI) is removed in mature form.

The protein belongs to the ponticulin family. Post-translationally, the GPI-like-anchor contains a phosphoceramide group, rather than a phosphatidyl group.

Its subcellular location is the cell membrane. Its function is as follows. Binds F-actin and nucleates actin assembly. In Dictyostelium discoideum (Social amoeba), this protein is Ponticulin-like protein K (ponK).